Consider the following 315-residue polypeptide: Ester hydrolase C11orf54 (315 aa).

Residues H266, H268, and H278 each coordinate Zn(2+).

In terms of assembly, monomer. Zn(2+) is required as a cofactor.

The protein resides in the nucleus. Its subcellular location is the cytoplasm. Exhibits ester hydrolase activity on the substrate p-nitrophenyl acetate, in vitro. Regulates DNA damage and repair by regulating HIF1A degradation via chaperone-mediated autophagy (CMA). Functionally, probably non-functional. This is Ester hydrolase C11orf54 (C11orf54) from Homo sapiens (Human).